Reading from the N-terminus, the 842-residue chain is Putative G-type lectin S-receptor-like serine/threonine-protein kinase At1g61610 (842 aa).

An N-terminal signal peptide occupies residues 1–22 (MAGFNRNLTLVTTLLIFHQLCS). Asparagine 7, asparagine 23, asparagine 35, asparagine 60, asparagine 110, asparagine 123, asparagine 304, asparagine 351, and asparagine 380 each carry an N-linked (GlcNAc...) asparagine glycan. The Extracellular portion of the chain corresponds to 23–443 (NVSCSTSNSF…KLGGGKENST (421 aa)). Residues 29-150 (SNSFTRNHTI…SDRRKWYWES (122 aa)) form the Bulb-type lectin domain. Positions 292 to 331 (PSTECEKYNRCGNYSVCDDSKEFDSGKCSCIDGFEPVHQD) constitute an EGF-like domain. Disulfide bonds link cysteine 296-cysteine 308 and cysteine 302-cysteine 319. The PAN domain occupies 350 to 431 (CNQSLVAGQE…GGNSINIRLA (82 aa)). 2 cysteine pairs are disulfide-bonded: cysteine 385-cysteine 406 and cysteine 389-cysteine 395. An N-linked (GlcNAc...) asparagine glycan is attached at asparagine 441. Residues 444–464 (LWIIVFSVIGAFLLGLCIWIL) form a helical membrane-spanning segment. Over 465–842 (WKFKKSLKAF…DVTFTTIVGR (378 aa)) the chain is Cytoplasmic. The Protein kinase domain maps to 525 to 814 (FAEENKLGQG…PRQPTFHSFL (290 aa)). Residues 531 to 539 (LGQGGFGTV) and lysine 553 each bind ATP. Serine 559 bears the Phosphoserine mark. A caM-binding region spans residues 614-631 (SKQGSLDWRKRWEVIGGI). The active-site Proton acceptor is the aspartate 650. Serine 654 and serine 667 each carry phosphoserine. A Phosphothreonine modification is found at threonine 684. A phosphoserine mark is found at serine 728 and serine 830. Threonine 837 bears the Phosphothreonine mark.

The protein belongs to the protein kinase superfamily. Ser/Thr protein kinase family.

The protein localises to the cell membrane. The catalysed reaction is L-seryl-[protein] + ATP = O-phospho-L-seryl-[protein] + ADP + H(+). It carries out the reaction L-threonyl-[protein] + ATP = O-phospho-L-threonyl-[protein] + ADP + H(+). This chain is Putative G-type lectin S-receptor-like serine/threonine-protein kinase At1g61610, found in Arabidopsis thaliana (Mouse-ear cress).